We begin with the raw amino-acid sequence, 500 residues long: Histidinol dehydrogenase homolog 1 (500 aa).

The segment at 1-25 (MPPAGGIFHRPPTTRKSRRLTPRSA) is disordered. Residues 12–21 (PTTRKSRRLT) show a composition bias toward basic residues. Zn(2+) contacts are provided by Gln313 and His316. Active-site proton acceptor residues include Glu381 and His382. The Zn(2+) site is built by Asp415 and His475.

This sequence belongs to the histidinol dehydrogenase family. It depends on Zn(2+) as a cofactor.

This chain is Histidinol dehydrogenase homolog 1, found in Mesorhizobium japonicum (strain LMG 29417 / CECT 9101 / MAFF 303099) (Mesorhizobium loti (strain MAFF 303099)).